The primary structure comprises 371 residues: Glutamate 5-kinase (371 aa).

Lysine 14 provides a ligand contact to ATP. Substrate is bound by residues serine 54, aspartate 141, and asparagine 153. 173-174 contributes to the ATP binding site; the sequence is TD. Residues 280-357 form the PUA domain; sequence AGSLIVDAGA…SDIEQLLGYI (78 aa).

The protein belongs to the glutamate 5-kinase family.

It is found in the cytoplasm. The enzyme catalyses L-glutamate + ATP = L-glutamyl 5-phosphate + ADP. Its pathway is amino-acid biosynthesis; L-proline biosynthesis; L-glutamate 5-semialdehyde from L-glutamate: step 1/2. Its function is as follows. Catalyzes the transfer of a phosphate group to glutamate to form L-glutamate 5-phosphate. The protein is Glutamate 5-kinase of Azoarcus sp. (strain BH72).